The primary structure comprises 349 residues: UPF0284 protein MM_0708 (349 aa).

The protein belongs to the UPF0284 family.

The polypeptide is UPF0284 protein MM_0708 (Methanosarcina mazei (strain ATCC BAA-159 / DSM 3647 / Goe1 / Go1 / JCM 11833 / OCM 88) (Methanosarcina frisia)).